The chain runs to 481 residues: 2-succinylbenzoate--CoA ligase (481 aa).

Belongs to the ATP-dependent AMP-binding enzyme family. MenE subfamily.

It catalyses the reaction 2-succinylbenzoate + ATP + CoA = 2-succinylbenzoyl-CoA + AMP + diphosphate. It functions in the pathway quinol/quinone metabolism; 1,4-dihydroxy-2-naphthoate biosynthesis; 1,4-dihydroxy-2-naphthoate from chorismate: step 5/7. Its pathway is quinol/quinone metabolism; menaquinone biosynthesis. In terms of biological role, converts 2-succinylbenzoate (OSB) to 2-succinylbenzoyl-CoA (OSB-CoA). The chain is 2-succinylbenzoate--CoA ligase from Bacillus mycoides (strain KBAB4) (Bacillus weihenstephanensis).